A 500-amino-acid chain; its full sequence is C6 finger domain transcription factor sirZ (500 aa).

Residues 28–54 constitute a DNA-binding region (zn(2)-C6 fungal-type); sequence CNACHEVKLKCLGGQPCARCRNKQVEC. Residues 79–88 are compositionally biased toward basic and acidic residues; sequence QAKAMSRPEE. Disordered stretches follow at residues 79–168 and 302–332; these read QAKA…EQIS and AGSF…GMYQ. The span at 135–147 shows a compositional bias: acidic residues; the sequence is GAEEELLDQEERD. The segment covering 154-165 has biased composition (low complexity); it reads LVENPPNLNPLE. The span at 304–316 shows a compositional bias: polar residues; it reads SFSTSGPGSSQEG. Over residues 317–328 the composition is skewed to low complexity; the sequence is SHFLSSRHSQSS.

It is found in the nucleus. In terms of biological role, transcription factor that regulates sirodesmin production and contributes to virulence. Probably binds to the consensus motif TCGGN(3)CCGA found in the promoters of sirT, sirP, sirO, sirN, sirP, sirB, sirR, sirJ and sirQ. This chain is C6 finger domain transcription factor sirZ, found in Leptosphaeria maculans (Blackleg fungus).